The following is a 967-amino-acid chain: uncharacterized protein (967 aa).

Disordered stretches follow at residues 1-23 (MQNA…FHDR) and 41-72 (FTMH…DPRT). The span at 14 to 23 (KGRDVNFHDR) shows a compositional bias: basic and acidic residues. Residues 60-72 (RLSNYSSAVDPRT) show a composition bias toward polar residues. A Phosphoserine modification is found at Ser86. Disordered regions lie at residues 135–259 (AVSE…QHLP), 271–296 (SVSR…SPPE), 380–399 (DSTT…APHK), 437–464 (HSYG…FVAD), and 499–544 (GTRF…KSLS). Polar residues predominate over residues 162 to 187 (ESSTSNNLETGNSTNTALHNVSSPLE). Residues 205 to 218 (HDLDEVISEKDTSL) are compositionally biased toward basic and acidic residues. Basic residues predominate over residues 221–234 (RSSRGRSSAPKRRK). The span at 278 to 294 (SPASTPRSSVSSVSSSP) shows a compositional bias: low complexity. The span at 382-394 (TTEYVNTESSSKT) shows a compositional bias: polar residues. Basic residues predominate over residues 499–508 (GTRFHSRSSH). Phosphoserine is present on Ser585. Disordered regions lie at residues 594 to 665 (ESNE…SVND) and 681 to 708 (DHRI…ESQH). The span at 608–622 (YDSRESTGHTIKELR) shows a compositional bias: basic and acidic residues. Residues 686-704 (ASDNQNNNNNDANALAENS) show a composition bias toward low complexity. 728-736 (PCVLDVKMG) contacts substrate.

The protein belongs to the inositol phosphokinase (IPK) family.

It localises to the cytoplasm. This is an uncharacterized protein from Schizosaccharomyces pombe (strain 972 / ATCC 24843) (Fission yeast).